Reading from the N-terminus, the 159-residue chain is Probable chemoreceptor glutamine deamidase CheD 1 (159 aa).

This sequence belongs to the CheD family.

It carries out the reaction L-glutaminyl-[protein] + H2O = L-glutamyl-[protein] + NH4(+). In terms of biological role, probably deamidates glutamine residues to glutamate on methyl-accepting chemotaxis receptors (MCPs), playing an important role in chemotaxis. This chain is Probable chemoreceptor glutamine deamidase CheD 1, found in Methanosarcina acetivorans (strain ATCC 35395 / DSM 2834 / JCM 12185 / C2A).